A 70-amino-acid polypeptide reads, in one-letter code: Conotoxin elongated-tx3a-a (70 aa).

Residues 1–24 (MLKMGVVLFIFLVLFPLATLQLDA) form the signal peptide. A propeptide spanning residues 25–44 (DQPVERYAENKQLLSPDERR) is cleaved from the precursor. Intrachain disulfides connect Cys55/Cys68, Cys56/Cys66, and Cys61/Cys69. 6'-bromotryptophan; partial is present on Trp58. Cys69 bears the Cysteine amide; partial mark.

Belongs to the conotoxin M superfamily. In terms of processing, two short peptides are produced from this precursor; Conotoxin tx3a-b is amidated at Cys-69 (but has no bromotryptophan), whereas conotoxin tx3a-a has an unmodified Gly-70 and a bromotryptophan. Two elongated peptides are also produced; Conotoxin elongated-tx3a-b is amidated at Cys-69 (but has no bromotryptophan), whereas conotoxin elongated tx3a-a has an unmodified Gly-70 (but has no bromotryptophan). Ju et al. (2022) describe a disulfide connectivity (C55-C61; C56-C69; C66-C68) that differs from that of Han and colleagues (2006), McDougal et al. (2008), and Ueberheide et al. (2009). As to expression, expressed by the venom duct. Is present in all duct parts with a highest content in part 2 (proximal of the venom bulb) and then decreases in concentration toward the end of the duct.

It is found in the secreted. Its function is as follows. Intracranial injection into mice causes scratching and hyperactivity. In vitro, inhibits proliferation of the mice ovarian cancer cells ID8. The sequence is that of Conotoxin elongated-tx3a-a from Conus textile (Cloth-of-gold cone).